Consider the following 381-residue polypeptide: MASPSCFHSEDEDSLKGCEMYVQKHGIQQVLKECIVHLCVAKPDRPLRFLREHFEKLEKEENRQILARQKSNSQCDSHDEEISPTPPNPVVKARRRRGGVSAEVYTEEDAVSYVRKVIPKDYKTMTALAKAISKNVLFSHLDDNERSDIFDAMFPVTHIDGETVIQQGNEGDNFYVIDQGEVDVYVNGEWVTNISEGGSFGELALIYGTPRAATVKAKTDLKLWGIDRDSYRRILMGSTLRKRKMYEEFLSKVSILESLEKWERLTVADALEPVQFEDGEKIVVQGEPGDDFYIITEGTASVLQRRSPNEEYVEVGRLGPSDYFGEIALLLNRPRAATVVARGPLKCVKLDRPRFERVLGPCSEILKRNIQRYNSFISLTV.

A dimerization and phosphorylation region spans residues 1–136 (MASPSCFHSE…ALAKAISKNV (136 aa)). A Phosphoserine modification is found at Ser3. A 3'-nitrotyrosine modification is found at Tyr21. Residues 66-88 (LARQKSNSQCDSHDEEISPTPPN) form a disordered region. 2 positions are modified to phosphoserine: Ser77 and Ser83. At Thr85 the chain carries Phosphothreonine. Positions 96 to 100 (RRGGV) match the Pseudophosphorylation motif motif. At Arg97 the chain carries Omega-N-methylarginine. 3',5'-cyclic AMP is bound by residues 137–254 (LFSH…SKVS), Glu202, Arg211, 255–381 (ILES…SLTV), Glu326, and Arg335.

The protein belongs to the cAMP-dependent kinase regulatory chain family. In terms of assembly, the inactive holoenzyme is composed of two regulatory chains and two catalytic chains. Activation by cAMP releases the two active catalytic monomers and the regulatory dimer. Interacts with PRKX; regulates this cAMP-dependent protein kinase. Interacts with smAKAP; this interaction may target PRKAR1B to the plasma membrane. Post-translationally, the pseudophosphorylation site binds to the substrate-binding region of the catalytic chain, resulting in the inhibition of its activity. In terms of tissue distribution, abundant in brain and testis. No expression in lung, heart, liver, spleen, kidney and skeletal muscle.

The protein localises to the cell membrane. Regulatory subunit of the cAMP-dependent protein kinases involved in cAMP signaling in cells. This chain is cAMP-dependent protein kinase type I-beta regulatory subunit (Prkar1b), found in Rattus norvegicus (Rat).